Reading from the N-terminus, the 219-residue chain is Mediator of RNA polymerase II transcription subunit 20b (219 aa).

Belongs to the Mediator complex subunit 20 family. In terms of assembly, component of the Mediator complex.

The protein localises to the nucleus. Its function is as follows. Component of the Mediator complex, a coactivator involved in the regulated transcription of nearly all RNA polymerase II-dependent genes. Mediator functions as a bridge to convey information from gene-specific regulatory proteins to the basal RNA polymerase II transcription machinery. The Mediator complex, having a compact conformation in its free form, is recruited to promoters by direct interactions with regulatory proteins and serves for the assembly of a functional preinitiation complex with RNA polymerase II and the general transcription factors. The sequence is that of Mediator of RNA polymerase II transcription subunit 20b (MED20B) from Arabidopsis thaliana (Mouse-ear cress).